A 380-amino-acid polypeptide reads, in one-letter code: 1-deoxy-D-xylulose 5-phosphate reductoisomerase (380 aa).

NADPH contacts are provided by serine 10, glycine 11, serine 12, isoleucine 13, glycine 36, lysine 37, asparagine 38, and asparagine 120. Position 121 (lysine 121) interacts with 1-deoxy-D-xylulose 5-phosphate. Glutamate 122 is a binding site for NADPH. A Mn(2+)-binding site is contributed by aspartate 146. 1-deoxy-D-xylulose 5-phosphate contacts are provided by serine 147, glutamate 148, serine 172, and histidine 195. Residue glutamate 148 participates in Mn(2+) binding. NADPH is bound at residue glycine 201. The 1-deoxy-D-xylulose 5-phosphate site is built by serine 208, asparagine 213, lysine 214, and glutamate 217. Glutamate 217 lines the Mn(2+) pocket.

This sequence belongs to the DXR family. It depends on Mg(2+) as a cofactor. The cofactor is Mn(2+).

The catalysed reaction is 2-C-methyl-D-erythritol 4-phosphate + NADP(+) = 1-deoxy-D-xylulose 5-phosphate + NADPH + H(+). The protein operates within isoprenoid biosynthesis; isopentenyl diphosphate biosynthesis via DXP pathway; isopentenyl diphosphate from 1-deoxy-D-xylulose 5-phosphate: step 1/6. Its function is as follows. Catalyzes the NADPH-dependent rearrangement and reduction of 1-deoxy-D-xylulose-5-phosphate (DXP) to 2-C-methyl-D-erythritol 4-phosphate (MEP). This chain is 1-deoxy-D-xylulose 5-phosphate reductoisomerase, found in Bacillus cereus (strain AH187).